The following is a 192-amino-acid chain: Probable apo-citrate lyase phosphoribosyl-dephospho-CoA transferase (192 aa).

The protein belongs to the CitX family.

It catalyses the reaction apo-[citrate lyase ACP] + 2'-(5''-triphospho-alpha-D-ribosyl)-3'-dephospho-CoA = holo-[citrate lyase ACP] + diphosphate. Its function is as follows. Transfers 2-(5''-triphosphoribosyl)-3'-dephosphocoenzyme-A on a serine residue to the apo-acyl carrier protein (gamma chain) of the citrate lyase to yield holo-acyl carrier protein. This chain is Probable apo-citrate lyase phosphoribosyl-dephospho-CoA transferase, found in Streptococcus pyogenes serotype M6 (strain ATCC BAA-946 / MGAS10394).